The chain runs to 311 residues: Porphobilinogen deaminase (311 aa).

Cys-241 carries the S-(dipyrrolylmethanemethyl)cysteine modification.

Belongs to the HMBS family. Monomer. Requires dipyrromethane as cofactor.

It carries out the reaction 4 porphobilinogen + H2O = hydroxymethylbilane + 4 NH4(+). Its pathway is porphyrin-containing compound metabolism; protoporphyrin-IX biosynthesis; coproporphyrinogen-III from 5-aminolevulinate: step 2/4. Its function is as follows. Tetrapolymerization of the monopyrrole PBG into the hydroxymethylbilane pre-uroporphyrinogen in several discrete steps. The protein is Porphobilinogen deaminase (hemC) of Halalkalibacterium halodurans (strain ATCC BAA-125 / DSM 18197 / FERM 7344 / JCM 9153 / C-125) (Bacillus halodurans).